Reading from the N-terminus, the 106-residue chain is Large ribosomal subunit protein eL42 (106 aa).

This sequence belongs to the eukaryotic ribosomal protein eL42 family.

This is Large ribosomal subunit protein eL42 (RPL44) from Kluyveromyces marxianus (Yeast).